A 268-amino-acid chain; its full sequence is WUSCHEL-related homeobox 11 (268 aa).

Residues 1–35 (MDQEQTPHSPTRHSRSPPSSASGSTSAEPVRSRWS) form a disordered region. Residues 16–27 (SPPSSASGSTSA) are compositionally biased toward low complexity. Residues 29–93 (PVRSRWSPKP…NRRSRSRRRQ (65 aa)) constitute a DNA-binding region (homeobox; WUS-type).

The protein belongs to the WUS homeobox family.

The protein localises to the nucleus. Its function is as follows. Transcription factor which may be involved in developmental processes. The protein is WUSCHEL-related homeobox 11 (WOX11) of Arabidopsis thaliana (Mouse-ear cress).